A 112-amino-acid chain; its full sequence is 2Fe-2S ferredoxin (112 aa).

The 103-residue stretch at 5-107 (IKVTFIINDG…GIKVRIPATT (103 aa)) folds into the 2Fe-2S ferredoxin-type domain. Residues cysteine 42, cysteine 48, cysteine 51, and cysteine 88 each coordinate [2Fe-2S] cluster.

The protein belongs to the adrenodoxin/putidaredoxin family. It depends on [2Fe-2S] cluster as a cofactor.

In terms of biological role, ferredoxin are iron-sulfur proteins that transfer electrons in a wide variety of metabolic reactions. The polypeptide is 2Fe-2S ferredoxin (fdxB) (Rickettsia conorii (strain ATCC VR-613 / Malish 7)).